Reading from the N-terminus, the 408-residue chain is Tyrosine--tRNA ligase (408 aa).

The 'HIGH' region motif lies at 46–55; that stretch reads PTAPDLHVGH. The 'KMSKS' region signature appears at 230–234; the sequence is KMSKS. Lysine 233 is an ATP binding site. The 62-residue stretch at 343–404 folds into the S4 RNA-binding domain; the sequence is VWICRLLTDA…GKRRFARIKF (62 aa).

This sequence belongs to the class-I aminoacyl-tRNA synthetase family. TyrS type 2 subfamily. As to quaternary structure, homodimer.

The protein resides in the cytoplasm. The enzyme catalyses tRNA(Tyr) + L-tyrosine + ATP = L-tyrosyl-tRNA(Tyr) + AMP + diphosphate + H(+). Catalyzes the attachment of tyrosine to tRNA(Tyr) in a two-step reaction: tyrosine is first activated by ATP to form Tyr-AMP and then transferred to the acceptor end of tRNA(Tyr). The polypeptide is Tyrosine--tRNA ligase (Syntrophotalea carbinolica (strain DSM 2380 / NBRC 103641 / GraBd1) (Pelobacter carbinolicus)).